A 137-amino-acid chain; its full sequence is Nuclear transition protein 2 (137 aa).

Residues Met-1–Pro-21 show a composition bias toward polar residues. A disordered region spans residues Met-1–Asn-137. His-12, His-16, His-24, Cys-29, Cys-31, Cys-35, and Cys-38 together coordinate Zn(2+). Over residues Gln-22–Pro-74 the composition is skewed to low complexity. Basic residues predominate over residues Pro-78–Pro-91. Positions Gly-110–Ile-118 match the Nuclear localization signal motif. The span at Lys-126–Asn-137 shows a compositional bias: basic residues. Position 132 is a phosphoserine (Ser-132).

The protein belongs to the nuclear transition protein 2 family. As to expression, testis. Expression is restricted to haploid germ cells.

It localises to the nucleus. The protein resides in the nucleolus. It is found in the chromosome. In terms of biological role, plays a key role in the replacement of histones to protamine in the elongating spermatids of mammals. In condensing spermatids, loaded onto the nucleosomes, where it promotes the recruitment and processing of protamines, which are responsible for histone eviction. The protein is Nuclear transition protein 2 (TNP2) of Sus scrofa (Pig).